Reading from the N-terminus, the 149-residue chain is Arginine repressor (149 aa).

This sequence belongs to the ArgR family.

The protein resides in the cytoplasm. The protein operates within amino-acid biosynthesis; L-arginine biosynthesis [regulation]. Functionally, regulates arginine biosynthesis genes. This is Arginine repressor from Exiguobacterium sibiricum (strain DSM 17290 / CCUG 55495 / CIP 109462 / JCM 13490 / 255-15).